The primary structure comprises 192 residues: Protein SHORT HYPOCOTYL IN WHITE LIGHT 1 (192 aa).

Positions 43 to 50 (FRRLNRSL) match the Nuclear localization signal motif. Residues 70–92 (GGDNYDVVPDDDGFSDDDDEEDE) are disordered. The segment covering 77 to 92 (VPDDDGFSDDDDEEDE) has biased composition (acidic residues). A run of 2 helical transmembrane segments spans residues 122-142 (ILPAAMSPRLVSFAVDGILLL) and 159-179 (GGTVFTVILLIRLFWAAASFF).

Interacts with HY5 and COP1 in the nucleus. Expressed in young seedlings (e.g. hypocotyl and cotyledons) and in green tissues (e.g. leaves, stems, sepals, and young siliques).

Its subcellular location is the nucleus membrane. In terms of biological role, negative regulator of photomorphogenesis modulating both light and abscisic acid (ABA) signaling pathways. Negatively regulates the light-mediated inhibition of hypocotyl elongation, probably in a PHYB-mediated signaling pathway, but promotes flowering time (especially in long days) and lateral root formation. Enhances light-regulated gene expression. Promotes COP1-mediated degradation of HY5 during seedling development (e.g. hypocotyl growth) through enhanced ubiquitination in the darkness. Also involved in root gravitropism. This chain is Protein SHORT HYPOCOTYL IN WHITE LIGHT 1, found in Arabidopsis thaliana (Mouse-ear cress).